The following is a 346-amino-acid chain: O-methyltransferase atr3 (346 aa).

Disordered stretches follow at residues 1–22 (MTSV…DDLM) and 52–88 (GLKS…WYHA). Residues 190-191 (DL) and 217-218 (DI) contribute to the S-adenosyl-L-methionine site.

Belongs to the class I-like SAM-binding methyltransferase superfamily. In terms of assembly, homodimer.

The enzyme catalyses 4-O-demethylbarbatate + S-adenosyl-L-methionine = proatranorin I + S-adenosyl-L-homocysteine. It participates in secondary metabolite biosynthesis; terpenoid biosynthesis. O-methyltransferase; part of the gene cluster that mediates the biosynthesis of atranorin, a depside of polyketide origin that accumulates in the cortical or medullary layers of lichen thalli. Atr3 methylates the carboxyl group of 4-O-demethylbarbatic acid to yield proatranorin I. Atr3 is also able to methylate the atr2 product proatranorin III to produce the final compound atranorin. The first step in the pathway is performed by the non-reducing polyketide synthase atr1 that produces 4-O-demethylbarbatic acid composed of two 3-methylorsellinic acid (3MOA) moieties. The pathway continues with the actions of the cytochrome P450 monooygenase atr2 that catalizes the oxidation of c-9 and the O-methyltransferase atr3 that performs the methylation of the carboxyl group to yield atranorin, via the proatranorin II and III intermediates if atr2 acts first, or the proatranorin I intermediate if atr3 acts first. This is O-methyltransferase atr3 from Stereocaulon alpinum (Alpine snow lichen).